A 1112-amino-acid polypeptide reads, in one-letter code: Mediator of RNA polymerase II transcription subunit 14 (1112 aa).

It belongs to the Mediator complex subunit 14 family. Component of the Mediator complex.

It localises to the nucleus. Functionally, component of the Mediator complex, a coactivator involved in the regulated transcription of nearly all RNA polymerase II-dependent genes. Mediator functions as a bridge to convey information from gene-specific regulatory proteins to the basal RNA polymerase II transcription machinery. Mediator is recruited to promoters by direct interactions with regulatory proteins and serves as a scaffold for the assembly of a functional preinitiation complex with RNA polymerase II and the general transcription factors. This Scheffersomyces stipitis (strain ATCC 58785 / CBS 6054 / NBRC 10063 / NRRL Y-11545) (Yeast) protein is Mediator of RNA polymerase II transcription subunit 14 (RGR1).